The following is a 288-amino-acid chain: uncharacterized protein (288 aa).

Residues 92 to 112 (LPTILVILGVIVVIAIVYAII) form a helical membrane-spanning segment. The segment at 121-183 (DDHNAASEKA…NDSEKLEIKA (63 aa)) is disordered. 2 stretches are compositionally biased toward basic and acidic residues: residues 136–146 (SKYEIPKDSTL) and 154–181 (SEKE…KLEI). Positions 147 to 185 (KENQNNSSEKETDTKKETKENEDKKKENDSEKLEIKAAG) form a coiled coil.

It is found in the cell membrane. This is an uncharacterized protein from Bacillus subtilis (strain 168).